Here is a 52-residue protein sequence, read N- to C-terminus: Small, acid-soluble spore protein K (52 aa).

Residues 1-52 (MGKQAEFWSESKNNSKIDGQPKAKSRFASKRPNGTINTHPQERMRAANQQEE) form a disordered region.

The protein belongs to the SspK family.

It localises to the spore core. This Bacillus anthracis (strain A0248) protein is Small, acid-soluble spore protein K.